We begin with the raw amino-acid sequence, 244 residues long: NH(3)-dependent NAD(+) synthetase (244 aa).

29 to 36 (GISGGIDS) is an ATP binding site. Residue aspartate 35 participates in Mg(2+) binding. Arginine 113 is a binding site for deamido-NAD(+). Threonine 133 provides a ligand contact to ATP. Mg(2+) is bound at residue glutamate 138. Deamido-NAD(+)-binding residues include lysine 146 and aspartate 153. Lysine 162 and threonine 184 together coordinate ATP. 230-231 (HK) contacts deamido-NAD(+).

The protein belongs to the NAD synthetase family. As to quaternary structure, homodimer.

The enzyme catalyses deamido-NAD(+) + NH4(+) + ATP = AMP + diphosphate + NAD(+) + H(+). Its pathway is cofactor biosynthesis; NAD(+) biosynthesis; NAD(+) from deamido-NAD(+) (ammonia route): step 1/1. Functionally, catalyzes the ATP-dependent amidation of deamido-NAD to form NAD. Uses ammonia as a nitrogen source. The protein is NH(3)-dependent NAD(+) synthetase of Mesoplasma florum (strain ATCC 33453 / NBRC 100688 / NCTC 11704 / L1) (Acholeplasma florum).